The following is a 75-amino-acid chain: uncharacterized protein (75 aa).

The segment at 1–23 (MADAMDLAQLREQEDRERHISNA) is disordered. Residues 9–20 (QLREQEDRERHI) are compositionally biased toward basic and acidic residues. The dksA C4-type zinc-finger motif lies at 35–59 (CEECDAPIPEARRRAIPGVQCCVTC).

This is an uncharacterized protein from Escherichia phage 186 (Bacteriophage 186).